A 311-amino-acid chain; its full sequence is Thymidylate synthase (311 aa).

DUMP contacts are provided by residues arginine 28 and 172–173 (RR). Cysteine 192 functions as the Nucleophile in the catalytic mechanism. DUMP is bound by residues 213-216 (RSCD), asparagine 224, and 254-256 (HLY). Aspartate 216 provides a ligand contact to (6R)-5,10-methylene-5,6,7,8-tetrahydrofolate. A (6R)-5,10-methylene-5,6,7,8-tetrahydrofolate-binding site is contributed by alanine 310.

It belongs to the thymidylate synthase family. Bacterial-type ThyA subfamily. In terms of assembly, homodimer.

It is found in the cytoplasm. It catalyses the reaction dUMP + (6R)-5,10-methylene-5,6,7,8-tetrahydrofolate = 7,8-dihydrofolate + dTMP. It participates in pyrimidine metabolism; dTTP biosynthesis. Catalyzes the reductive methylation of 2'-deoxyuridine-5'-monophosphate (dUMP) to 2'-deoxythymidine-5'-monophosphate (dTMP) while utilizing 5,10-methylenetetrahydrofolate (mTHF) as the methyl donor and reductant in the reaction, yielding dihydrofolate (DHF) as a by-product. This enzymatic reaction provides an intracellular de novo source of dTMP, an essential precursor for DNA biosynthesis. This Sphingopyxis alaskensis (strain DSM 13593 / LMG 18877 / RB2256) (Sphingomonas alaskensis) protein is Thymidylate synthase.